A 174-amino-acid polypeptide reads, in one-letter code: Protein SHI RELATED SEQUENCE 3 (174 aa).

Residues C9, C12, C20, C25, C29, and C36 each coordinate Zn(2+). Residues 9 to 36 constitute a DNA-binding region (zn(2)-C6 fungal-type; degenerate); sequence CEDCGNQAKKDCVYMRCRTCCKSKAFHC. The short motif at 110-113 is the Required for homo- and heterodimerization element; that stretch reads IGGH.

It belongs to the SHI protein family.

Its subcellular location is the nucleus. Its function is as follows. Transcription activator that binds DNA on 5'-ACTCTAC-3' and promotes auxin homeostasis-regulating gene expression (e.g. YUC genes), as well as genes affecting stamen development, cell expansion and timing of flowering. Synergistically with other SHI-related proteins, regulates gynoecium, stamen and leaf development in a dose-dependent manner, controlling apical-basal patterning. Promotes style and stigma formation, and influences vascular development during gynoecium development. May also have a role in the formation and/or maintenance of the shoot apical meristem (SAM). The protein is Protein SHI RELATED SEQUENCE 3 (SRS3) of Arabidopsis thaliana (Mouse-ear cress).